The sequence spans 989 residues: Phosphoenolpyruvate carboxylase (989 aa).

Residues His175 and Lys630 contribute to the active site.

This sequence belongs to the PEPCase type 1 family. It depends on Mg(2+) as a cofactor.

It catalyses the reaction oxaloacetate + phosphate = phosphoenolpyruvate + hydrogencarbonate. In terms of biological role, forms oxaloacetate, a four-carbon dicarboxylic acid source for the tricarboxylic acid cycle. The chain is Phosphoenolpyruvate carboxylase from Prochlorococcus marinus (strain MIT 9215).